A 217-amino-acid chain; its full sequence is Probable GTP-binding protein EngB (217 aa).

Residues glycine 33 to arginine 217 form the EngB-type G domain. GTP is bound by residues glycine 41 to serine 48, glycine 68 to glutamate 72, aspartate 95 to glycine 98, threonine 162 to aspartate 165, and threonine 196 to serine 198. The Mg(2+) site is built by serine 48 and threonine 70.

This sequence belongs to the TRAFAC class TrmE-Era-EngA-EngB-Septin-like GTPase superfamily. EngB GTPase family. Mg(2+) serves as cofactor.

Its function is as follows. Necessary for normal cell division and for the maintenance of normal septation. The protein is Probable GTP-binding protein EngB of Rhizobium meliloti (strain 1021) (Ensifer meliloti).